The following is a 280-amino-acid chain: MSTLQYPGPPPPSSMNLHNPHMNHHHGLVGPGLAPLSAPNGIQSLNTLHNGSGPPSHTPFYIDNILGSRLNMTGPARPTPTLPSPTFPAHMNSAYNSYYEQAVHPGLAAPTPISYGSGAFSSPPPYPFARGDYPHGLIDRHDPYSKVPGKPFLWNPFIQRPLHKRKGGQVRFSNDQTMELEKKFESQKYLSPPERKKLAKLLQLSERQVKTWFQNRRAKWRRVKQEVPTGKGEGDENSHEKPRDLDRDDFSREQVLSNGAACAFTHGGGSEADSLEEKEA.

Disordered stretches follow at residues 1 to 35 and 221 to 280; these read MSTL…GLAP and RRVK…EKEA. The segment at residues 165–224 is a DNA-binding region (homeobox); sequence RKGGQVRFSNDQTMELEKKFESQKYLSPPERKKLAKLLQLSERQVKTWFQNRRAKWRRVK. Over residues 232 to 252 the composition is skewed to basic and acidic residues; sequence GEGDENSHEKPRDLDRDDFSR.

Its subcellular location is the nucleus. Transcription factor that may play a central role in activating or maintaining gene expression in the vegetal pole. Part of a gene regulatory circuit with Erg and Tgif that operates early in mesoderm development. The protein is Hematopoietically-expressed homeobox protein HHEX homolog of Patiria miniata (Bat star).